The sequence spans 198 residues: ATP-dependent Clp protease proteolytic subunit 1 (198 aa).

Catalysis depends on Ser98, which acts as the Nucleophile. His123 is a catalytic residue.

This sequence belongs to the peptidase S14 family. Fourteen ClpP subunits assemble into 2 heptameric rings which stack back to back to give a disk-like structure with a central cavity, resembling the structure of eukaryotic proteasomes.

It localises to the cytoplasm. The catalysed reaction is Hydrolysis of proteins to small peptides in the presence of ATP and magnesium. alpha-casein is the usual test substrate. In the absence of ATP, only oligopeptides shorter than five residues are hydrolyzed (such as succinyl-Leu-Tyr-|-NHMec, and Leu-Tyr-Leu-|-Tyr-Trp, in which cleavage of the -Tyr-|-Leu- and -Tyr-|-Trp bonds also occurs).. Functionally, cleaves peptides in various proteins in a process that requires ATP hydrolysis. Has a chymotrypsin-like activity. Plays a major role in the degradation of misfolded proteins. ClpXP1 is involved in the complete degradation of the Site-2 clipped anti-sigma-W factor RsiW. This results in the release of SigW and the transcription activation of the genes under the control of the sigma-W factor. The protein is ATP-dependent Clp protease proteolytic subunit 1 of Bacillus licheniformis (strain ATCC 14580 / DSM 13 / JCM 2505 / CCUG 7422 / NBRC 12200 / NCIMB 9375 / NCTC 10341 / NRRL NRS-1264 / Gibson 46).